The following is a 119-amino-acid chain: 5-hydroxyisourate hydrolase (119 aa).

Residues H8, R47, and Y116 each contribute to the substrate site.

It belongs to the transthyretin family. 5-hydroxyisourate hydrolase subfamily. Homotetramer.

The enzyme catalyses 5-hydroxyisourate + H2O = 5-hydroxy-2-oxo-4-ureido-2,5-dihydro-1H-imidazole-5-carboxylate + H(+). The protein operates within purine metabolism; urate degradation; (S)-allantoin from urate: step 2/3. Catalyzes the hydrolysis of 5-hydroxyisourate (HIU) to 2-oxo-4-hydroxy-4-carboxy-5-ureidoimidazoline (OHCU). The protein is 5-hydroxyisourate hydrolase of Halalkalibacterium halodurans (strain ATCC BAA-125 / DSM 18197 / FERM 7344 / JCM 9153 / C-125) (Bacillus halodurans).